The sequence spans 190 residues: Peptide methionine sulfoxide reductase MsrA (190 aa).

C21 is a catalytic residue.

It belongs to the MsrA Met sulfoxide reductase family.

The catalysed reaction is L-methionyl-[protein] + [thioredoxin]-disulfide + H2O = L-methionyl-(S)-S-oxide-[protein] + [thioredoxin]-dithiol. The enzyme catalyses [thioredoxin]-disulfide + L-methionine + H2O = L-methionine (S)-S-oxide + [thioredoxin]-dithiol. Its function is as follows. Has an important function as a repair enzyme for proteins that have been inactivated by oxidation. Catalyzes the reversible oxidation-reduction of methionine sulfoxide in proteins to methionine. This chain is Peptide methionine sulfoxide reductase MsrA, found in Polynucleobacter asymbioticus (strain DSM 18221 / CIP 109841 / QLW-P1DMWA-1) (Polynucleobacter necessarius subsp. asymbioticus).